The sequence spans 184 residues: Peptidyl-tRNA hydrolase (184 aa).

Tyrosine 14 is a binding site for tRNA. Histidine 19 functions as the Proton acceptor in the catalytic mechanism. TRNA is bound by residues phenylalanine 60 and asparagine 62.

The protein belongs to the PTH family. As to quaternary structure, monomer.

It localises to the cytoplasm. It carries out the reaction an N-acyl-L-alpha-aminoacyl-tRNA + H2O = an N-acyl-L-amino acid + a tRNA + H(+). In terms of biological role, hydrolyzes ribosome-free peptidyl-tRNAs (with 1 or more amino acids incorporated), which drop off the ribosome during protein synthesis, or as a result of ribosome stalling. Functionally, catalyzes the release of premature peptidyl moieties from peptidyl-tRNA molecules trapped in stalled 50S ribosomal subunits, and thus maintains levels of free tRNAs and 50S ribosomes. The chain is Peptidyl-tRNA hydrolase from Mesomycoplasma hyopneumoniae (strain 232) (Mycoplasma hyopneumoniae).